We begin with the raw amino-acid sequence, 537 residues long: MSGQQRGSVILVPEHLAGALTKLMSDFITGQDVTLSGGNIAVKIRDAINQTPGGGDVAILSSLFALWNALPTSGRQSSRDDLIPAAVQALTTAHNLCLGVIPGETSHKDTPESLLRAIVTGLQKLWVDSCGCPECLQCLKGLKAIKPGLYEIPRIIPHTKQCSPVNLLNMLVHKLVALRGHVQLAYDARVLTPDFHEIPDLDDSDAVFARTLLAALFHLNMFFILKDYITQDSMSLKQALSGHWMSATGNPLPAAPETLRDYLEAFRNSDNHFYLPTTGPLNTFKFPEELLGRVVVIDSSLCAASHVQDVITRGVGAGVPRPQFLALPPAPSRKPQQTCSQLTSRGNESSRRNLGQPGGTSPAVPPVCPIVSLTASGAKQNRGGMGSLHLAKPEETSPAVSPVCPIASPAASRSKQHCGVTGSSQAAPSSSSVAPVASLSGDLEEEEEGSRESPSLPSSKKGADEFEAWLEAQDANFEDVQREFSGLRVIGDEDEDGSEDGEFSDLDLSDSDHEGDEGGGAVGGGRSLHSLYSLSVI.

2 disordered regions span residues 325–474 (LALP…EAQD) and 486–537 (GLRV…LSVI). Polar residues predominate over residues 334–347 (KPQQTCSQLTSRGN). Low complexity predominate over residues 423 to 441 (SSQAAPSSSSVAPVASLSG). Positions 492-517 (DEDEDGSEDGEFSDLDLSDSDHEGDE) are enriched in acidic residues.

The protein belongs to the lymphocryptovirus BRRF2 family.

The protein localises to the virion tegument. This chain is Tegument protein BRRF2, found in Homo sapiens (Human).